A 486-amino-acid polypeptide reads, in one-letter code: MTTFYTVVSWLVILGYWILIAGVTLRILMKRRAVPSAMAWLLIIYILPLVGIIAYLSFGELHLGKRRAERARAMWPSTAKWLNDLKACKHIFAEENSSVASSLFKLCERRQGIAGVKGNQLQLLTDSDDVMQALIRDIQLARHNIEMVFYIWQPGGMADQVAESLMAAARRGIHCRLMLDSAGSVAFFRSPWAAMMRNAGIEVVEALKVNLMRVFLRRMDLRQHRKMVMIDNYIAYTGSMNMVDPRFFKQDAGVGQWVDLMARMEGPVATAMGIVYSCDWEIETGKRILPPPPDVNIMPFEQASGHTIHTIASGPGFPEDLIHQALLTAAYSAREYLIMTTPYFVPSDDLLHAICTAAQRGVDVSIILPRKNDSMLVGWASRAFFTELLAAGVKIYQFEGGLLHTKSVLVDGELSLVGTVNLDMRSLWLNFEITLVIDDAGFGGDLAAVQDDYISRSRLLDARLWVKRPLWQRITERLFYFFSPLL.

2 helical membrane-spanning segments follow: residues 3-23 and 38-58; these read TFYT…IAGV and MAWL…YLSF. PLD phosphodiesterase domains follow at residues 219 to 246 and 399 to 426; these read MDLR…VDPR and EGGL…DMRS. Catalysis depends on residues histidine 224, lysine 226, aspartate 231, histidine 404, lysine 406, and aspartate 411.

Belongs to the phospholipase D family. Cardiolipin synthase subfamily. ClsA sub-subfamily.

It is found in the cell inner membrane. It catalyses the reaction 2 a 1,2-diacyl-sn-glycero-3-phospho-(1'-sn-glycerol) = a cardiolipin + glycerol. In terms of biological role, catalyzes the reversible phosphatidyl group transfer from one phosphatidylglycerol molecule to another to form cardiolipin (CL) (diphosphatidylglycerol) and glycerol. The chain is Cardiolipin synthase A from Citrobacter koseri (strain ATCC BAA-895 / CDC 4225-83 / SGSC4696).